Here is a 478-residue protein sequence, read N- to C-terminus: Antiviral innate immune response effector IFIT1 (478 aa).

TPR repeat units follow at residues 52–85, 95–128, 141–174, 183–216, 218–249, and 251–284; these read VGIH…MQEE, LVTW…CKKL, IDCE…DPEN, ISAY…NPDN, YIKV…NMSS, and TYVF…TPTS. Trp-147 is an mRNA binding site. Residue Gly-190 coordinates RNA. Residues Lys-259, His-289, Gln-290, and Lys-336 each contribute to the RNA site. TPR repeat units lie at residues 305 to 339, 340 to 373, 378 to 412, and 437 to 470; these read ATKG…KPTF, EVAH…KPVV, QDIH…EQAS, and LESL…AADF.

The protein belongs to the IFIT family. As to quaternary structure, component of an interferon-dependent multiprotein complex, at least composed of IFIT1, IFIT2 and IFIT3. Interacts (via TPR repeats 1-4) with RPL15. Interacts with STING1/MITA; could disrupt STING1 interaction with MAVS or TBK1, acting as a negative-feedback regulator of virus-triggered signaling. Interacts with EIF3E; this could be an alternative way to inhibit translation. Phosphorylated. Post-translationally, ISGylated.

It localises to the cytoplasm. Functionally, plays a key role in the innate immune response as part of an interferon-dependent multiprotein complex, recognizing and sequestering viral RNAs that lack host-specific 2'-O-methylation at their 5' cap. By distinguishing these RNAs from host mRNAs, inhibits their translation by competing with the translation initiation factor eIF4E. Could also prevent viral replication through its interaction with DNA replication origin-binding protein E1 of several viruses. Causes the translocation of E1 from the nucleus to the cytoplasm and can also inhibit its helicase activity in vitro. Exhibits antiviral activity against many viruses from the Flaviviridae (West Nile virus, Dengue virus, hepatitis C virus), Coronaviridae (human 229E coronavirus, SARS-CoV-2 and SARS-CoV), Poxviridae (vaccinia virus) and Togaviridae (Sindbis virus) families. The chain is Antiviral innate immune response effector IFIT1 from Homo sapiens (Human).